A 271-amino-acid polypeptide reads, in one-letter code: Proteasome inhibitor PI31 subunit (271 aa).

At alanine 2 the chain carries N-acetylalanine. The important for homodimerization and interaction with FBXO7 stretch occupies residues 2–150 (AGLEVLFASA…PIHEQWEKVR (149 aa)). Residues serine 153 and serine 189 each carry the phosphoserine modification. Arginine 205 is modified (omega-N-methylarginine). An Asymmetric dimethylarginine modification is found at arginine 219. Positions 221–271 (LIDPSSGLPNRLPPGAVPPGARFDPFGPIGTSPSGPNPDHLPPPGYDDMYL) are disordered. The residue at position 231 (arginine 231) is an Omega-N-methylarginine. The residue at position 252 (serine 252) is a Phosphoserine. The span at 255–265 (GPNPDHLPPPG) shows a compositional bias: pro residues.

Belongs to the proteasome inhibitor PI31 family. In terms of assembly, monomer and homodimer. Interacts with FBXO7.

The protein localises to the cytoplasm. The protein resides in the endoplasmic reticulum. Functionally, plays an important role in control of proteasome function. Inhibits the hydrolysis of protein and peptide substrates by the 20S proteasome. Also inhibits the activation of the proteasome by the proteasome regulatory proteins PA700 and PA28. This Rattus norvegicus (Rat) protein is Proteasome inhibitor PI31 subunit (Psmf1).